We begin with the raw amino-acid sequence, 394 residues long: [Pyruvate dehydrogenase (acetyl-transferring)] kinase 1, mitochondrial (394 aa).

The N-terminal 20 residues, 1–20, are a transit peptide targeting the mitochondrion; it reads MWKIMRSWKCGGMRWAHRQR. The Histidine kinase domain occupies 126–386; the sequence is AYPYELHNPP…DVYIKLKGPS (261 aa). His148 bears the Phosphohistidine; by autocatalysis mark. ATP is bound by residues 267-274, Asp304, 323-324, and 347-352; these read EVFKNAFE, ST, and GMGFGL.

The protein belongs to the PDK/BCKDK protein kinase family. Interacts with PKP2.

It is found in the mitochondrion matrix. The catalysed reaction is L-seryl-[pyruvate dehydrogenase E1 alpha subunit] + ATP = O-phospho-L-seryl-[pyruvate dehydrogenase E1 alpha subunit] + ADP + H(+). Functionally, inhibits the mitochondrial pyruvate dehydrogenase complex by phosphorylation of the E1 alpha subunit (PDA1), thus contributing to the regulation of glucose metabolism. Also involved in telomere maintenance. The protein is [Pyruvate dehydrogenase (acetyl-transferring)] kinase 1, mitochondrial of Saccharomyces cerevisiae (strain ATCC 204508 / S288c) (Baker's yeast).